The primary structure comprises 937 residues: Protein translocase subunit SecA (937 aa).

Residues Gln90, 108 to 112 (GEGKT), and Asp509 contribute to the ATP site.

Belongs to the SecA family. Monomer and homodimer. Part of the essential Sec protein translocation apparatus which comprises SecA, SecYEG and auxiliary proteins SecDF. Other proteins may also be involved.

The protein resides in the cell inner membrane. Its subcellular location is the cellular thylakoid membrane. The protein localises to the cytoplasm. The enzyme catalyses ATP + H2O + cellular proteinSide 1 = ADP + phosphate + cellular proteinSide 2.. In terms of biological role, part of the Sec protein translocase complex. Interacts with the SecYEG preprotein conducting channel. Has a central role in coupling the hydrolysis of ATP to the transfer of proteins into and across the cell membrane, serving as an ATP-driven molecular motor driving the stepwise translocation of polypeptide chains across the membrane. Functionally, probably participates in protein translocation into and across both the cytoplasmic and thylakoid membranes in cyanobacterial cells. This is Protein translocase subunit SecA from Parasynechococcus marenigrum (strain WH8102).